A 446-amino-acid chain; its full sequence is Ribulose bisphosphate carboxylase large chain (446 aa).

Residues Asn-89 and Thr-139 each coordinate substrate. Lys-141 functions as the Proton acceptor in the catalytic mechanism. Lys-143 contacts substrate. The Mg(2+) site is built by Lys-167, Asp-169, and Glu-170. Position 167 is an N6-carboxylysine (Lys-167). His-260 (proton acceptor) is an active-site residue. Positions 261, 293, and 345 each coordinate substrate.

This sequence belongs to the RuBisCO large chain family. Type I subfamily. Heterohexadecamer of 8 large chains and 8 small chains; disulfide-linked. The disulfide link is formed within the large subunit homodimers. It depends on Mg(2+) as a cofactor. The disulfide bond which can form in the large chain dimeric partners within the hexadecamer appears to be associated with oxidative stress and protein turnover.

The protein localises to the plastid. It is found in the chloroplast. The enzyme catalyses 2 (2R)-3-phosphoglycerate + 2 H(+) = D-ribulose 1,5-bisphosphate + CO2 + H2O. It carries out the reaction D-ribulose 1,5-bisphosphate + O2 = 2-phosphoglycolate + (2R)-3-phosphoglycerate + 2 H(+). In terms of biological role, ruBisCO catalyzes two reactions: the carboxylation of D-ribulose 1,5-bisphosphate, the primary event in carbon dioxide fixation, as well as the oxidative fragmentation of the pentose substrate in the photorespiration process. Both reactions occur simultaneously and in competition at the same active site. This Exacum affine (Persian violet) protein is Ribulose bisphosphate carboxylase large chain.